The chain runs to 255 residues: Hydroxyacylglutathione hydrolase (255 aa).

Positions 55, 57, 59, 60, 112, 129, and 167 each coordinate Zn(2+).

This sequence belongs to the metallo-beta-lactamase superfamily. Glyoxalase II family. Monomer. It depends on Zn(2+) as a cofactor.

It carries out the reaction an S-(2-hydroxyacyl)glutathione + H2O = a 2-hydroxy carboxylate + glutathione + H(+). Its pathway is secondary metabolite metabolism; methylglyoxal degradation; (R)-lactate from methylglyoxal: step 2/2. Thiolesterase that catalyzes the hydrolysis of S-D-lactoyl-glutathione to form glutathione and D-lactic acid. In Halorhodospira halophila (strain DSM 244 / SL1) (Ectothiorhodospira halophila (strain DSM 244 / SL1)), this protein is Hydroxyacylglutathione hydrolase.